Reading from the N-terminus, the 156-residue chain is Small ribosomal subunit protein uS7 (156 aa).

Belongs to the universal ribosomal protein uS7 family. In terms of assembly, part of the 30S ribosomal subunit. Contacts proteins S9 and S11.

In terms of biological role, one of the primary rRNA binding proteins, it binds directly to 16S rRNA where it nucleates assembly of the head domain of the 30S subunit. Is located at the subunit interface close to the decoding center, probably blocks exit of the E-site tRNA. The chain is Small ribosomal subunit protein uS7 from Prochlorococcus marinus (strain MIT 9312).